The primary structure comprises 395 residues: Pyridinium-3,5-bisthiocarboxylic acid mononucleotide nickel insertion protein (395 aa).

Belongs to the LarC family.

The catalysed reaction is Ni(II)-pyridinium-3,5-bisthiocarboxylate mononucleotide = pyridinium-3,5-bisthiocarboxylate mononucleotide + Ni(2+). In terms of biological role, involved in the biosynthesis of a nickel-pincer cofactor ((SCS)Ni(II) pincer complex). Binds Ni(2+), and functions in nickel delivery to pyridinium-3,5-bisthiocarboxylic acid mononucleotide (P2TMN), to form the mature cofactor. Is thus probably required for the activation of nickel-pincer cofactor-dependent enzymes. The chain is Pyridinium-3,5-bisthiocarboxylic acid mononucleotide nickel insertion protein from Staphylococcus epidermidis (strain ATCC 12228 / FDA PCI 1200).